Consider the following 376-residue polypeptide: Glutamate 5-kinase (376 aa).

K15 contacts ATP. Substrate is bound by residues S55, D142, and N154. ATP-binding positions include 174–175 (TD) and 216–222 (TGGMATK). Residues 281–359 (AGKVLVDAGA…AEIEQLLGYR (79 aa)) form the PUA domain.

Belongs to the glutamate 5-kinase family.

It localises to the cytoplasm. The enzyme catalyses L-glutamate + ATP = L-glutamyl 5-phosphate + ADP. It functions in the pathway amino-acid biosynthesis; L-proline biosynthesis; L-glutamate 5-semialdehyde from L-glutamate: step 1/2. Catalyzes the transfer of a phosphate group to glutamate to form L-glutamate 5-phosphate. In Trichlorobacter lovleyi (strain ATCC BAA-1151 / DSM 17278 / SZ) (Geobacter lovleyi), this protein is Glutamate 5-kinase.